Reading from the N-terminus, the 163-residue chain is Small ribosomal subunit protein bS6 (163 aa).

The disordered stretch occupies residues 97-163 (EEGQTAMLTN…GRNEGEGDRA (67 aa)). The segment covering 122–163 (RGPRRDFGDRGPRRDFGDRGPRRDGDGPRAEGGRNEGEGDRA) has biased composition (basic and acidic residues).

The protein belongs to the bacterial ribosomal protein bS6 family.

In terms of biological role, binds together with bS18 to 16S ribosomal RNA. The chain is Small ribosomal subunit protein bS6 from Rhodospirillum centenum (strain ATCC 51521 / SW).